The following is a 398-amino-acid chain: Serine/threonine-protein kinase 32A (398 aa).

Gly-2 carries the N-myristoyl glycine lipid modification. The 259-residue stretch at 23–281 folds into the Protein kinase domain; it reads FEILRAIGKG…LTDIQNFPYM (259 aa). ATP is bound by residues 29 to 37 and Lys-52; that span reads IGKGSFGKV. Asp-146 (proton acceptor) is an active-site residue. The tract at residues 379-398 is disordered; the sequence is ALEQTKNNTEEEEDGQNNNL. The segment covering 388–398 has biased composition (acidic residues); the sequence is EEEEDGQNNNL.

Belongs to the protein kinase superfamily. Ser/Thr protein kinase family. Mg(2+) serves as cofactor.

It localises to the cell membrane. It carries out the reaction L-seryl-[protein] + ATP = O-phospho-L-seryl-[protein] + ADP + H(+). It catalyses the reaction L-threonyl-[protein] + ATP = O-phospho-L-threonyl-[protein] + ADP + H(+). In Mus musculus (Mouse), this protein is Serine/threonine-protein kinase 32A.